The primary structure comprises 284 residues: MFGKRKDSKNKAMRDNEELTPWERQQLLREENIEKKQKKSKKILVSSNLVKFNGLRKRRLQKRVITLASIFGISAIISLYAILPVSRVSNIEIEGTDSQTKTAIIEASQVKKNESLFAVVPTKFLIRQRIKNDVATVKDVNISLKKNVVKFKVTEYDIVGYIQRKNTYYKLTSNGRELNVGQKATNGNYPLFLDFKKKTLLHEAAQQVGEMPKKVRFGISEIHSSPTKVNPKRVRLVMNDGNEVIGSIDTLATKMSYYPSMAKALGKKGVIDLEVGAYAYPYBK.

Residues 1 to 21 (MFGKRKDSKNKAMRDNEELTP) form a disordered region. Residues 1–63 (MFGKRKDSKN…GLRKRRLQKR (63 aa)) lie on the Cytoplasmic side of the membrane. Residues 64–84 (VITLASIFGISAIISLYAILP) traverse the membrane as a helical segment. Topologically, residues 85–284 (VSRVSNIEIE…VGAYAYPYBK (200 aa)) are extracellular. The 71-residue stretch at 86–156 (SRVSNIEIEG…NVVKFKVTEY (71 aa)) folds into the POTRA domain.

It belongs to the FtsQ/DivIB family. DivIB subfamily.

Its subcellular location is the cell membrane. In terms of biological role, cell division protein that may be involved in stabilizing or promoting the assembly of the division complex. In Ligilactobacillus salivarius (strain CECT 5713) (Lactobacillus salivarius), this protein is Cell division protein DivIB.